Consider the following 269-residue polypeptide: Tryptophan synthase alpha chain (269 aa).

Active-site proton acceptor residues include glutamate 49 and aspartate 60.

This sequence belongs to the TrpA family. In terms of assembly, tetramer of two alpha and two beta chains.

The enzyme catalyses (1S,2R)-1-C-(indol-3-yl)glycerol 3-phosphate + L-serine = D-glyceraldehyde 3-phosphate + L-tryptophan + H2O. It functions in the pathway amino-acid biosynthesis; L-tryptophan biosynthesis; L-tryptophan from chorismate: step 5/5. Functionally, the alpha subunit is responsible for the aldol cleavage of indoleglycerol phosphate to indole and glyceraldehyde 3-phosphate. The protein is Tryptophan synthase alpha chain of Salmonella arizonae (strain ATCC BAA-731 / CDC346-86 / RSK2980).